The primary structure comprises 3955 residues: Nonribosomal peptide synthetase fmqA (3955 aa).

The segment at 293-691 (SYSELETLSL…AQACCTIRNV (399 aa)) is adenylation 1. Residues 806–879 (THKETLIHQL…DLARLTDVVN (74 aa)) form the Carrier 1 domain. Ser840 carries the post-translational modification O-(pantetheine 4'-phosphoryl)serine. A condensation 1 region spans residues 916-1187 (QDIYPCTPLQ…IATVPLRVRL (272 aa)). The tract at residues 1371 to 1766 (TYAELGELSD…DEVEKHVYQC (396 aa)) is adenylation 2. The Carrier 2 domain occupies 1880–1956 (EPTSVAEREM…KIMSHESSLS (77 aa)). Ser1917 is modified (O-(pantetheine 4'-phosphoryl)serine). The segment at 1970–2261 (FALSPIQQMF…FTTMWPVVAE (292 aa)) is epimerase. A condensation 2 region spans residues 2438–2724 (EDIYPCSPSQ…FNPLPCRVHL (287 aa)). Residues 2906–3299 (TYGQLDELSS…GEVEANVQHC (394 aa)) form an adenylation 3 region. The region spanning 3422–3498 (APSTEEEKKL…DLAKVAVPKS (77 aa)) is the Carrier 3 domain. Ser3459 is modified (O-(pantetheine 4'-phosphoryl)serine). Residues 3541 to 3805 (PGTQAQQFFI…CLNFIPLRVM (265 aa)) are condensation 3.

This sequence belongs to the NRP synthetase family. Interacts with the mitogen-activated protein kinase mpkA.

It is found in the cytoplasmic vesicle. It participates in alkaloid biosynthesis. Nonribosomal peptide synthetase; part of the gene cluster that mediates the biosynthesis of the antitumor fumiquinazolines that confer a dual-usage capability to defend against phagocytes in the environment and animal hosts. The simplest member is fumiquinazoline F (FQF) with a 6-6-6 tricyclic core derived from anthranilic acid (Ant), tryptophan (Trp), and alanine (Ala). The trimodular NRPS fmqA is responsible for FQF formation. Modules 1, 2 and 3 of fmqA are predicted to activate and load Ant, Trp and Ala, respectively, providing for the assembly of an Ant-Trp-Ala-S-enzyme intermediate that would undergo double cyclization for chain release and generation of the tricyclic 6-6-6 product fumiquinazoline F. The presence of an E domain predicted for module 2 of fmqA is consistent with epimerization of L-Trp to D-Trp during assembly to generate the R-stereocenter at C14 of FQF. The FAD-dependent monooxygenase fmqB and the monomodular NRPS fmqC then maturate FQF to FQA. FmqB oxidizes the 2',3'-double bond of the indole side chain of FQF, and fmqC activates L-Ala as the adenylate, installs it as the pantetheinyl thioester on its carrier protein domain, and acylates the oxidized indole for subsequent intramolecular cyclization to create the 6-5-5-imidazolindolone of FQA. The FAD-linked oxidoreductase fmqD introduces a third layer of scaffold complexity by converting FQA to the spirohemiaminal FQC, presumably by catalyzing the formation of a transient imine within the pyrazinone ring. FQC subsequently converts nonenzymatically to the known cyclic aminal FQD. This is Nonribosomal peptide synthetase fmqA from Aspergillus fumigatus (strain ATCC MYA-4609 / CBS 101355 / FGSC A1100 / Af293) (Neosartorya fumigata).